An 867-amino-acid chain; its full sequence is Probable alpha,alpha-trehalose-phosphate synthase [UDP-forming] 9 (867 aa).

A Phosphoserine modification is found at serine 5. Phosphothreonine is present on threonine 32. The tract at residues 59–546 (ERKIIVANML…AKSFMQDLER (488 aa)) is glycosyltransferase.

In the N-terminal section; belongs to the glycosyltransferase 20 family. This sequence in the C-terminal section; belongs to the trehalose phosphatase family.

The catalysed reaction is D-glucose 6-phosphate + UDP-alpha-D-glucose = alpha,alpha-trehalose 6-phosphate + UDP + H(+). This is Probable alpha,alpha-trehalose-phosphate synthase [UDP-forming] 9 (TPS9) from Arabidopsis thaliana (Mouse-ear cress).